Here is a 247-residue protein sequence, read N- to C-terminus: Phycocyanobilin:ferredoxin oxidoreductase (247 aa).

It belongs to the HY2 family.

It catalyses the reaction (2R,3Z)-phycocyanobilin + 4 oxidized [2Fe-2S]-[ferredoxin] = biliverdin IXalpha + 4 reduced [2Fe-2S]-[ferredoxin] + 4 H(+). Its function is as follows. Catalyzes the four-electron reduction of biliverdin IX-alpha (2-electron reduction at both the A and D rings); the reaction proceeds via an isolatable 2-electron intermediate, 181,182-dihydrobiliverdin. The chain is Phycocyanobilin:ferredoxin oxidoreductase (pcyA) from Prochlorococcus marinus (strain SARG / CCMP1375 / SS120).